The following is a 201-amino-acid chain: UPF0637 protein LSEI_1198 (201 aa).

Belongs to the UPF0637 family.

In Lacticaseibacillus paracasei (strain ATCC 334 / BCRC 17002 / CCUG 31169 / CIP 107868 / KCTC 3260 / NRRL B-441) (Lactobacillus paracasei), this protein is UPF0637 protein LSEI_1198.